The sequence spans 206 residues: Guanylate kinase (206 aa).

The 179-residue stretch at 4–182 (ANLFIISAPS…AVQNLIHIIS (179 aa)) folds into the Guanylate kinase-like domain. 11 to 18 (APSGAGKT) is a binding site for ATP.

It belongs to the guanylate kinase family.

Its subcellular location is the cytoplasm. It catalyses the reaction GMP + ATP = GDP + ADP. Its function is as follows. Essential for recycling GMP and indirectly, cGMP. The sequence is that of Guanylate kinase from Coxiella burnetii (strain RSA 493 / Nine Mile phase I).